We begin with the raw amino-acid sequence, 814 residues long: Origin of replication complex subunit 1 (814 aa).

The span at 1-15 (MDLSATPSRSKSGLR) shows a compositional bias: polar residues. The interval 1–127 (MDLSATPSRS…PKKPKKRAYY (127 aa)) is disordered. Low complexity-rich tracts occupy residues 51 to 62 (APMSPVTPSSVR) and 69 to 80 (ETPTKVTSETPV). Residues 105 to 112 (PKRQRQRQ) carry the Nuclear localization signal motif. A compositionally biased stretch (basic residues) spans 108-127 (QRQRQRQRQQPKKPKKRAYY). The tract at residues 157 to 181 (DPEAEECRVCFRAGAAVMVECDVCL) is histone H3 binding. The PHD-type zinc-finger motif lies at 160–209 (AEECRVCFRAGAAVMVECDVCLGGFHLRCVRPPLRRVPEGDWACPYCEAE). Residues cysteine 163, cysteine 166, cysteine 177, cysteine 180, histidine 185, and cysteine 188 each coordinate Zn(2+). Positions 197-201 (PEGDW) are histone H3 binding. Residues cysteine 203 and cysteine 206 each contribute to the Zn(2+) site. One can recognise a BAH domain in the interval 218 to 335 (PKPPEGKRIV…IHWHNFKRLA (118 aa)). The histone H3 binding stretch occupies residues 310–315 (ASDQGD). 2 stretches are compositionally biased toward acidic residues: residues 339–349 (DEPETKEDPGD) and 360–373 (SDSD…EEEE). The tract at residues 339–384 (DEPETKEDPGDEPYNAGNDYVSDSDEDSEYDEEEEPTKCSSARTHQ) is disordered. Positions 433–804 (PKSLPCRDKE…DDVTFALKES (372 aa)) are necessary and sufficient for ORC complex assembly. Residues 468–475 (GVPGTGKT) and 468–476 (GVPGTGKTM) contribute to the ATP site. Residues aspartate 558 and glutamate 559 each contribute to the Mg(2+) site. Positions 559, 592, and 657 each coordinate ATP.

It belongs to the ORC1 family. Component of the origin recognition complex (ORC) composed of at least ORC1, ORC2, ORC3, ORC4, ORC5 and ORC6. ORC is regulated in a cell-cycle and development dependent manner. It is sequentially assembled at the exit from anaphase of mitosis and disassembled as cells enter S phase. Binds unmodified and methylated histone H3. Expressed strongly in root tips and shoot apical meristem (SAM), and weakly in young leaves. Not detected in mature leaves.

Its subcellular location is the nucleus. Essential protein. Component of the origin recognition complex (ORC) that binds origins of replication. It has a role in both chromosomal replication and mating type transcriptional silencing. Binds to the ARS consensus sequence (ACS) of origins of replication. H3K4me3 effector that positively regulates the transcription of a subset of genes. Required for cell proliferation. This Oryza sativa subsp. japonica (Rice) protein is Origin of replication complex subunit 1.